The sequence spans 478 residues: Ribulose bisphosphate carboxylase large chain (478 aa).

The propeptide occupies 1–2; it reads MS. At Pro-3 the chain carries N-acetylproline. Lys-14 is modified (N6,N6,N6-trimethyllysine). Substrate-binding residues include Asn-123 and Thr-173. Catalysis depends on Lys-175, which acts as the Proton acceptor. Lys-177 is a substrate binding site. Residues Lys-201, Asp-203, and Glu-204 each contribute to the Mg(2+) site. Lys-201 bears the N6-carboxylysine mark. The Proton acceptor role is filled by His-294. Residues Arg-295, His-327, and Ser-379 each contribute to the substrate site.

This sequence belongs to the RuBisCO large chain family. Type I subfamily. In terms of assembly, heterohexadecamer of 8 large chains and 8 small chains; disulfide-linked. The disulfide link is formed within the large subunit homodimers. Mg(2+) serves as cofactor. The disulfide bond which can form in the large chain dimeric partners within the hexadecamer appears to be associated with oxidative stress and protein turnover.

The protein localises to the plastid. It is found in the chloroplast. The catalysed reaction is 2 (2R)-3-phosphoglycerate + 2 H(+) = D-ribulose 1,5-bisphosphate + CO2 + H2O. It catalyses the reaction D-ribulose 1,5-bisphosphate + O2 = 2-phosphoglycolate + (2R)-3-phosphoglycerate + 2 H(+). RuBisCO catalyzes two reactions: the carboxylation of D-ribulose 1,5-bisphosphate, the primary event in carbon dioxide fixation, as well as the oxidative fragmentation of the pentose substrate in the photorespiration process. Both reactions occur simultaneously and in competition at the same active site. This chain is Ribulose bisphosphate carboxylase large chain, found in Lemna minor (Common duckweed).